Here is a 245-residue protein sequence, read N- to C-terminus: Chromosome partition protein MukE (245 aa).

The interval 213–245 (PESIAAEKATADDESAVSNEEDFEYDDNQEGAE) is disordered. Acidic residues predominate over residues 224–245 (DDESAVSNEEDFEYDDNQEGAE).

The protein belongs to the MukE family. Interacts, and probably forms a ternary complex, with MukF and MukB. The complex formation is stimulated by calcium or magnesium.

The protein resides in the cytoplasm. It is found in the nucleoid. Involved in chromosome condensation, segregation and cell cycle progression. May participate in facilitating chromosome segregation by condensation DNA from both sides of a centrally located replisome during cell division. Probably acts via its interaction with MukB and MukF. The polypeptide is Chromosome partition protein MukE (Actinobacillus succinogenes (strain ATCC 55618 / DSM 22257 / CCUG 43843 / 130Z)).